Reading from the N-terminus, the 151-residue chain is D-aminoacyl-tRNA deacylase (151 aa).

A Gly-cisPro motif, important for rejection of L-amino acids motif is present at residues 139 to 140; that stretch reads GP.

This sequence belongs to the DTD family. In terms of assembly, homodimer.

Its subcellular location is the cytoplasm. The enzyme catalyses glycyl-tRNA(Ala) + H2O = tRNA(Ala) + glycine + H(+). The catalysed reaction is a D-aminoacyl-tRNA + H2O = a tRNA + a D-alpha-amino acid + H(+). In terms of biological role, an aminoacyl-tRNA editing enzyme that deacylates mischarged D-aminoacyl-tRNAs. Also deacylates mischarged glycyl-tRNA(Ala), protecting cells against glycine mischarging by AlaRS. Acts via tRNA-based rather than protein-based catalysis; rejects L-amino acids rather than detecting D-amino acids in the active site. By recycling D-aminoacyl-tRNA to D-amino acids and free tRNA molecules, this enzyme counteracts the toxicity associated with the formation of D-aminoacyl-tRNA entities in vivo and helps enforce protein L-homochirality. This Symbiobacterium thermophilum (strain DSM 24528 / JCM 14929 / IAM 14863 / T) protein is D-aminoacyl-tRNA deacylase.